The following is a 1406-amino-acid chain: Carboxypeptidase D (1406 aa).

The N-terminal stretch at 1–25 (MPTLGLLFASIGIAVLAMGVPHCRG) is a signal peptide. At 26 to 1312 (YTIKEDESFL…VNEHVFGLPR (1287 aa)) the chain is on the extracellular side. Peptidase M14 domains are found at residues 39–335 (HYAS…LRQA) and 455–760 (EHHN…IEQV). Residues histidine 101 and glutamate 104 each contribute to the Zn(2+) site. Residue asparagine 133 is glycosylated (N-linked (GlcNAc...) asparagine). 3 disulfides stabilise this stretch: cysteine 156/cysteine 309, cysteine 236/cysteine 237, and cysteine 268/cysteine 308. Zn(2+) is bound at residue histidine 217. Asparagine 269 carries N-linked (GlcNAc...) asparagine glycosylation. Glutamate 305 (proton donor/acceptor) is an active-site residue. N-linked (GlcNAc...) asparagine glycosylation occurs at asparagine 458. Zn(2+) contacts are provided by histidine 517 and glutamate 520. N-linked (GlcNAc...) asparagine glycosylation is found at asparagine 549 and asparagine 612. A Zn(2+)-binding site is contributed by histidine 626. Asparagine 652 carries N-linked (GlcNAc...) asparagine glycosylation. The active-site Proton donor/acceptor is the glutamate 730. Asparagine 787, asparagine 808, asparagine 981, asparagine 1152, and asparagine 1251 each carry an N-linked (GlcNAc...) asparagine glycan. Positions 863–1121 (RYHTNPQVRA…DKIKNFLALV (259 aa)) constitute a Peptidase M14 3 domain. A helical transmembrane segment spans residues 1313-1333 (FLFILCASVLIIVGVIVCVLC). Residues 1334–1406 (AQFWFYRRHR…TNYSFIIQAA (73 aa)) are Cytoplasmic-facing. The Cell attachment site signature appears at 1343–1345 (RGD). Serine 1380 is subject to Phosphoserine.

Belongs to the peptidase M14 family. As to quaternary structure, monomer. The cofactor is Zn(2+). Expressed in the central nervous system (CNS) of adults and larvae. In the adult brain, increased levels of expression in the mushroom body (MB) and neurosecretory cells.

It is found in the membrane. It localises to the cytoplasm. The protein localises to the perinuclear region. The protein resides in the golgi apparatus. Its subcellular location is the trans-Golgi network. It is found in the secreted. The enzyme catalyses Releases C-terminal Arg and Lys from polypeptides.. With respect to regulation, inhibited by 2-guanidinoethylmercaptosuccinic acid (GEMSA). Functionally, metallocarboxypeptidase that catalyzes the release of C-terminal arginine or lysine residues from peptides and proteins. Functionally important for processing a broad range of proteins including growth factors, peptide hormones (such as Akh) and neuropeptides. Consequently, it is involved in a wide range of processes including viability, memory formation, locomotive activity, wing formation, and peptide-regulated behaviors such as starvation-induced hyperactivity, appetitive gustatory preference, and cold and ethanol sensitivity. Key enzyme in neuropeptide processing. Involved in regulation of memory formation, possibly via the insulin pathway in neurosecretory cells. The protein is Carboxypeptidase D of Drosophila melanogaster (Fruit fly).